Consider the following 223-residue polypeptide: Killer cell lectin-like receptor subfamily B member 1B allele B (223 aa).

At M1–C45 the chain is on the cytoplasmic side. The ITIM motif signature appears at V5–L10. An LCK-binding motif motif is present at residues C31–P34. A helical; Signal-anchor for type II membrane protein transmembrane segment spans residues A46–L66. Topologically, residues Q67–S223 are extracellular. Residues H101–Q211 enclose the C-type lectin domain. 2 disulfide bridges follow: C122/C210 and C189/C202.

Homodimer; disulfide-linked. Interacts with tyrosine kinase LCK. Binds PTPN6/SHP-1 in a phosphorylation-dependent manner. In terms of tissue distribution, expressed in a subset of natural killer cells.

The protein resides in the membrane. Its function is as follows. Receptor for CLEC2D/OCIL. Ligand-binding contributes to inhibition of cytotoxic natural killer (NK) cells. May mediate MHC class I-independent 'missing-self' recognition of allografts, tumor cells and virus-infected cells. In Rattus norvegicus (Rat), this protein is Killer cell lectin-like receptor subfamily B member 1B allele B.